The primary structure comprises 330 residues: Adenylate isopentenyltransferase 8, chloroplastic (330 aa).

The N-terminal 35 residues, 1–35 (MQNLTSTFVSPSMIPITSPRLRLPPPRSVVPMTTV), are a transit peptide targeting the chloroplast. 50 to 57 (GATGSGKS) provides a ligand contact to ATP.

This sequence belongs to the IPP transferase family. In terms of tissue distribution, expressed in roots and in immature seeds with highest expression in the chalazal endosperm.

It is found in the plastid. The protein localises to the chloroplast. The enzyme catalyses dimethylallyl diphosphate + ADP = N(6)-(dimethylallyl)adenosine 5'-diphosphate + diphosphate. The catalysed reaction is dimethylallyl diphosphate + ATP = N(6)-(dimethylallyl)adenosine 5'-triphosphate + diphosphate. Its function is as follows. Involved in cytokinin biosynthesis. Catalyzes the transfer of an isopentenyl group from dimethylallyl diphosphate (DMAPP) to ATP and ADP. The polypeptide is Adenylate isopentenyltransferase 8, chloroplastic (IPT8) (Arabidopsis thaliana (Mouse-ear cress)).